Here is a 205-residue protein sequence, read N- to C-terminus: Probable GTP-binding protein EngB (205 aa).

An EngB-type G domain is found at 27 to 201 (TGIEIAFAGR…AVKLDFWFSP (175 aa)). GTP contacts are provided by residues 35-42 (GRSNAGKS), 62-66 (GRTQL), 80-83 (DLPG), 147-150 (TKAD), and 180-182 (FSA). Ser42 and Thr64 together coordinate Mg(2+).

Belongs to the TRAFAC class TrmE-Era-EngA-EngB-Septin-like GTPase superfamily. EngB GTPase family. Mg(2+) is required as a cofactor.

Its function is as follows. Necessary for normal cell division and for the maintenance of normal septation. This is Probable GTP-binding protein EngB from Haemophilus influenzae (strain PittGG).